We begin with the raw amino-acid sequence, 158 residues long: Small ribosomal subunit protein uS13 (158 aa).

Belongs to the universal ribosomal protein uS13 family. Part of the 30S ribosomal subunit. Forms a loose heterodimer with protein S19. Forms two bridges to the 50S subunit in the 70S ribosome.

Its function is as follows. Located at the top of the head of the 30S subunit, it contacts several helices of the 16S rRNA. In the 70S ribosome it contacts the 23S rRNA (bridge B1a) and protein L5 of the 50S subunit (bridge B1b), connecting the 2 subunits; these bridges are implicated in subunit movement. This chain is Small ribosomal subunit protein uS13, found in Picrophilus torridus (strain ATCC 700027 / DSM 9790 / JCM 10055 / NBRC 100828 / KAW 2/3).